The chain runs to 645 residues: 1,4-alpha-glucan branching enzyme GlgB (645 aa).

Aspartate 309 functions as the Nucleophile in the catalytic mechanism. Catalysis depends on glutamate 352, which acts as the Proton donor. The disordered stretch occupies residues valine 619 to arginine 645. Over residues arginine 636–arginine 645 the composition is skewed to polar residues.

This sequence belongs to the glycosyl hydrolase 13 family. GlgB subfamily. In terms of assembly, monomer.

It catalyses the reaction Transfers a segment of a (1-&gt;4)-alpha-D-glucan chain to a primary hydroxy group in a similar glucan chain.. It participates in glycan biosynthesis; glycogen biosynthesis. In terms of biological role, catalyzes the formation of the alpha-1,6-glucosidic linkages in glycogen by scission of a 1,4-alpha-linked oligosaccharide from growing alpha-1,4-glucan chains and the subsequent attachment of the oligosaccharide to the alpha-1,6 position. The sequence is that of 1,4-alpha-glucan branching enzyme GlgB from Bacillus cereus (strain Q1).